Here is a 399-residue protein sequence, read N- to C-terminus: Bifunctional enzyme IspD/IspF (399 aa).

The segment at 1–239 (MHTWALLLAA…SSEKKNMQVP (239 aa)) is 2-C-methyl-D-erythritol 4-phosphate cytidylyltransferase. A 2-C-methyl-D-erythritol 2,4-cyclodiphosphate synthase region spans residues 240–399 (CVGWGYDVHR…AVTALRRVSS (160 aa)). D246 and H248 together coordinate a divalent metal cation. 4-CDP-2-C-methyl-D-erythritol 2-phosphate-binding positions include 246–248 (DVH) and 273–274 (HS). H281 is an a divalent metal cation binding site. Residues 295-297 (DIG), 300-304 (FPDTD), 371-374 (TTEE), and F378 each bind 4-CDP-2-C-methyl-D-erythritol 2-phosphate.

In the N-terminal section; belongs to the IspD/TarI cytidylyltransferase family. IspD subfamily. It in the C-terminal section; belongs to the IspF family. Requires a divalent metal cation as cofactor.

The catalysed reaction is 2-C-methyl-D-erythritol 4-phosphate + CTP + H(+) = 4-CDP-2-C-methyl-D-erythritol + diphosphate. It carries out the reaction 4-CDP-2-C-methyl-D-erythritol 2-phosphate = 2-C-methyl-D-erythritol 2,4-cyclic diphosphate + CMP. The protein operates within isoprenoid biosynthesis; isopentenyl diphosphate biosynthesis via DXP pathway; isopentenyl diphosphate from 1-deoxy-D-xylulose 5-phosphate: step 2/6. It functions in the pathway isoprenoid biosynthesis; isopentenyl diphosphate biosynthesis via DXP pathway; isopentenyl diphosphate from 1-deoxy-D-xylulose 5-phosphate: step 4/6. Bifunctional enzyme that catalyzes the formation of 4-diphosphocytidyl-2-C-methyl-D-erythritol from CTP and 2-C-methyl-D-erythritol 4-phosphate (MEP) (IspD), and catalyzes the conversion of 4-diphosphocytidyl-2-C-methyl-D-erythritol 2-phosphate (CDP-ME2P) to 2-C-methyl-D-erythritol 2,4-cyclodiphosphate (ME-CPP) with a corresponding release of cytidine 5-monophosphate (CMP) (IspF). The sequence is that of Bifunctional enzyme IspD/IspF from Oleidesulfovibrio alaskensis (strain ATCC BAA-1058 / DSM 17464 / G20) (Desulfovibrio alaskensis).